A 397-amino-acid chain; its full sequence is Dual-specificity RNA methyltransferase RlmN (397 aa).

The active-site Proton acceptor is Glu-120. In terms of domain architecture, Radical SAM core spans 126–369 (ETDRGTLCVS…VRTPRGRDIL (244 aa)). A disulfide bridge links Cys-133 with Cys-372. [4Fe-4S] cluster is bound by residues Cys-140, Cys-144, and Cys-147. Residues 198–199 (GE), Ser-230, 252–254 (SLH), and Asn-329 contribute to the S-adenosyl-L-methionine site. Cys-372 functions as the S-methylcysteine intermediate in the catalytic mechanism.

It belongs to the radical SAM superfamily. RlmN family. Requires [4Fe-4S] cluster as cofactor.

The protein resides in the cytoplasm. The catalysed reaction is adenosine(2503) in 23S rRNA + 2 reduced [2Fe-2S]-[ferredoxin] + 2 S-adenosyl-L-methionine = 2-methyladenosine(2503) in 23S rRNA + 5'-deoxyadenosine + L-methionine + 2 oxidized [2Fe-2S]-[ferredoxin] + S-adenosyl-L-homocysteine. It carries out the reaction adenosine(37) in tRNA + 2 reduced [2Fe-2S]-[ferredoxin] + 2 S-adenosyl-L-methionine = 2-methyladenosine(37) in tRNA + 5'-deoxyadenosine + L-methionine + 2 oxidized [2Fe-2S]-[ferredoxin] + S-adenosyl-L-homocysteine. Its function is as follows. Specifically methylates position 2 of adenine 2503 in 23S rRNA and position 2 of adenine 37 in tRNAs. m2A2503 modification seems to play a crucial role in the proofreading step occurring at the peptidyl transferase center and thus would serve to optimize ribosomal fidelity. The chain is Dual-specificity RNA methyltransferase RlmN from Nitrobacter winogradskyi (strain ATCC 25391 / DSM 10237 / CIP 104748 / NCIMB 11846 / Nb-255).